The chain runs to 2339 residues: Voltage-dependent N-type calcium channel subunit alpha-1B (2339 aa).

At 1 to 90 the chain is on the cytoplasmic side; that stretch reads MVRFGDELGG…DNVVRKYAKR (90 aa). Gly residues predominate over residues 15–34; the sequence is AGGAERARGGGAGGAGGPGP. Residues 15–37 are disordered; the sequence is AGGAERARGGGAGGAGGPGPGGL. An Omega-N-methylarginine modification is found at Arg22. One copy of the I repeat lies at 82-359; it reads NVVRKYAKRI…LVLGVLSGEF (278 aa). Residues 91–114 traverse the membrane as a helical segment; sequence ITEWPPFEYMILATIIANCIVLAL. The Extracellular portion of the chain corresponds to 115 to 131; that stretch reads EQHLPDGDKTPMSERLD. A helical membrane pass occupies residues 132–152; that stretch reads DTEPYFIGIFCFEAGIKILAL. Topologically, residues 153–163 are cytoplasmic; the sequence is GFVLHKGSYLR. Residues 164–182 form a helical membrane-spanning segment; it reads NGWNVMDFVVVLTGILATA. Topologically, residues 183-187 are extracellular; the sequence is GTDFD. The chain crosses the membrane as a helical span at residues 188–211; the sequence is LRTLRAVRVLRPLKLVSGIPSLQV. Topologically, residues 212–221 are cytoplasmic; it reads VLKSIMKAMV. The helical transmembrane segment at 222–244 threads the bilayer; sequence PLLQIGLLLFFAILMFAIIGLEF. Residues 245–331 lie on the Extracellular side of the membrane; it reads YMGKFHKACF…NTNDAAGNTW (87 aa). An N-linked (GlcNAc...) asparagine glycan is attached at Asn256. A helical membrane pass occupies residues 332-356; it reads NWLYFIPLIIIGSFFMLNLVLGVLS. Over 357-483 the chain is Cytoplasmic; the sequence is GEFAKERERV…FFIRRMVKAQ (127 aa). The interval 379 to 396 is binding to the beta subunit; that stretch reads QQIERELNGYLEWIFKAE. Ser411 carries the phosphoserine modification. Position 452-459 (452-459) interacts with ATP; that stretch reads ASLKSGKT. Residues 469–713 form an II repeat; it reads EKMFRFFIRR…VFLAIAVDNL (245 aa). Residues 484–502 traverse the membrane as a helical segment; the sequence is SFYWTVLCVVALNTLCVAM. Residues 503-512 are Extracellular-facing; sequence VHYNQPQRLT. The helical transmembrane segment at 513 to 535 threads the bilayer; the sequence is TALYFAEFVFLGLFLTEMSLKMY. Residues 536–545 lie on the Cytoplasmic side of the membrane; sequence GLGPRSYFRS. Ser545 is an a 1,2-diacyl-sn-glycero-3-phospho-(1D-myo-inositol-4,5-bisphosphate) binding site. A helical transmembrane segment spans residues 546–567; it reads SFNCFDFGVIVGSIFEVVWAAV. The Extracellular segment spans residues 568–574; it reads KPGTSFG. A helical transmembrane segment spans residues 575-587; the sequence is ISVLRALRLLRIF. 2 residues coordinate a 1,2-diacyl-sn-glycero-3-phospho-(1D-myo-inositol-4,5-bisphosphate): Arg585 and Lys588. Residues 588-605 lie on the Cytoplasmic side of the membrane; that stretch reads KVTKYWNSLRNLVVSLLN. Residues 606–631 form a helical membrane-spanning segment; it reads SMKSIISLLFLLFLFIVVFALLGMQL. Residues 632–683 are Extracellular-facing; sequence FGGQFNFKDETPTTNFDTFPAAILTVFQILTGEDWNAVMYHGIESQGGVSRG. The chain crosses the membrane as a helical span at residues 684–710; that stretch reads MFSSFYFIVLTLFGNYTLLNVFLAIAV. Topologically, residues 711–1156 are cytoplasmic; sequence DNLANAQELT…CCHYIVTMRY (446 aa). Phosphoserine occurs at positions 746, 749, and 784. Basic and acidic residues-rich tracts occupy residues 809–827, 870–891, 927–937, 973–984, and 999–1026; these read DVKT…RDAP, EQDR…EERG, GSPEEAAEREP, CPREAESSEEPA, and TAEK…RNHQ. Disordered regions lie at residues 809-1026 and 1056-1084; these read DVKT…RNHQ and VEEQ…TTVH. The span at 1066 to 1083 shows a compositional bias: polar residues; it reads QRNVTRMGSQPPDTSTTV. Ser1074 carries the post-translational modification Phosphoserine. The stretch at 1142 to 1424 is one III repeat; the sequence is NLLRRCCHYI…IFVALIIITF (283 aa). A helical membrane pass occupies residues 1157–1175; sequence FEMVILVVIALSSIALAAE. At 1176 to 1183 the chain is on the extracellular side; sequence DPVRTDSP. The chain crosses the membrane as a helical span at residues 1184 to 1208; the sequence is RNNALKYMDYIFTGVFTFEMVIKMI. Over 1209-1222 the chain is Cytoplasmic; the sequence is DLGLLLHPGAYFRD. A helical transmembrane segment spans residues 1223–1243; sequence LWNILDFIVVSGALVAFAFSG. Topologically, residues 1244–1249 are extracellular; it reads SKGKDI. The chain crosses the membrane as a helical span at residues 1250–1270; it reads STIKSLRVLRVLRPLKTIKRL. At 1271–1288 the chain is on the cytoplasmic side; it reads PKLKAVFDCVVNSLKNVL. A helical transmembrane segment spans residues 1289–1308; sequence NILIVYMLFMFIFAVIAVQL. Over 1309-1395 the chain is Extracellular; it reads FKGKFFYCTD…EQGPSPGYRM (87 aa). The helical transmembrane segment at 1396-1421 threads the bilayer; the sequence is ELSIFYVVYFVVFPFFFVNIFVALII. Topologically, residues 1422 to 1476 are cytoplasmic; it reads ITFQEQGDKVMSECSLEKNERACIDFAISARPLTRYMPQNKQSFQYKTWTFVVSP. The IV repeat unit spans residues 1461-1714; sequence NKQSFQYKTW…LFVAVIMDNF (254 aa). A helical transmembrane segment spans residues 1477 to 1495; it reads PFEYFIMAMIALNTVVLMM. At 1496-1503 the chain is on the extracellular side; it reads KFYDAPYE. A helical membrane pass occupies residues 1504–1528; sequence YELMLKCLNIVFTSMFSMECVLKII. Topologically, residues 1529–1538 are cytoplasmic; that stretch reads AFGVLNYFRD. The helical transmembrane segment at 1539 to 1560 threads the bilayer; it reads AWNVFDFVTVLGSITDILVTEI. Residues 1561–1566 lie on the Extracellular side of the membrane; that stretch reads ANNFIN. An N-linked (GlcNAc...) asparagine glycan is attached at Asn1566. Residues 1567–1585 traverse the membrane as a helical segment; that stretch reads LSFLRLFRAARLIKLLRQG. Topologically, residues 1586-1604 are cytoplasmic; sequence YTIRILLWTFVQSFKALPY. The chain crosses the membrane as a helical span at residues 1605 to 1624; it reads VCLLIAMLFFIYAIIGMQVF. Topologically, residues 1625–1686 are extracellular; the sequence is GNIALDDDTS…SNASECGSDF (62 aa). Asn1678 carries an N-linked (GlcNAc...) asparagine glycan. Residues 1687–1710 traverse the membrane as a helical segment; that stretch reads AYFYFVSFIFLCSFLMLNLFVAVI. The Cytoplasmic segment spans residues 1711–2339; that stretch reads MDNFEYLTRD…CHHPDRDRRC (629 aa). One can recognise an EF-hand domain in the interval 1727–1762; that stretch reads HHLDEFIRVWAEYDPAACGRISYSDMFEMLKHMSPP. 3 residues coordinate Ca(2+): Asp1740, Arg1746, and Asp1751. Residues 1983 to 2312 form a disordered region; that stretch reads TLSGPDAEPQ…QPPPLRRVPN (330 aa). Residues 2050–2064 are compositionally biased toward basic residues; the sequence is PHHHHHRCHRRRDRK. Ser2067 is modified (phosphoserine). Over residues 2099–2136 the composition is skewed to basic and acidic residues; it reads CRRERERRQERGRSQERRQPSSSSSEKHRFYSCDRFGG. Polar residues-rich tracts occupy residues 2144 to 2155 and 2165 to 2181; these read PSLSSHPTSPTA and GSGS…SGAS. Ser2224, Ser2233, and Ser2256 each carry phosphoserine. The span at 2286–2302 shows a compositional bias: low complexity; that stretch reads SNSGRSSRTSYVSSLTS.

The protein belongs to the calcium channel alpha-1 subunit (TC 1.A.1.11) family. CACNA1B subfamily. Multisubunit complex consisting of alpha-1, alpha-2, beta and delta subunits in a 1:1:1:1 ratio. The channel activity is directed by the pore-forming and voltage-sensitive alpha-1 subunit. In many cases, this subunit is sufficient to generate voltage-sensitive calcium channel activity. The auxiliary subunits beta and alpha-2/delta linked by a disulfide bridge regulate the channel activity. Interacts with RIMS1. Interacts with FMR1 (via C-terminus); this interaction induces a decrease in the number of presynaptic functional CACNA1B channels at the cell surface. In terms of processing, phosphorylated in vitro by CaM-kinase II, PKA, PKC and CGPK. In terms of tissue distribution, widespread expression throughout the brain. Highest levels in corpus striatum and midbrain.

Its subcellular location is the membrane. The enzyme catalyses Ca(2+)(in) = Ca(2+)(out). Is specifically blocked by omega-conotoxin GVIA. Is specifically blocked by omega-conotoxin MVIIA (ziconotide). Is insensitive to dihydropyridines (DHP). Its function is as follows. Voltage-sensitive calcium channels (VSCC) mediate the entry of calcium ions into excitable cells and are also involved in a variety of calcium-dependent processes, including muscle contraction, hormone or neurotransmitter release, gene expression, cell motility, cell division and cell death. This alpha-1B subunit gives rise to N-type calcium currents. N-type calcium channels belong to the 'high-voltage activated' (HVA) group. They are involved in pain signaling. Calcium channels containing alpha-1B subunit may play a role in directed migration of immature neurons. Mediates Ca(2+) release probability at hippocampal neuronal soma and synaptic terminals. The chain is Voltage-dependent N-type calcium channel subunit alpha-1B (CACNA1B) from Oryctolagus cuniculus (Rabbit).